The chain runs to 311 residues: S-adenosyl-L-methionine-dependent tRNA 4-demethylwyosine synthase (311 aa).

Residues cysteine 26, cysteine 39, cysteine 52, cysteine 62, cysteine 66, and cysteine 69 each contribute to the [4Fe-4S] cluster site. Positions 45 to 283 (YGIETHRCIQ…LKLAKMLDEN (239 aa)) constitute a Radical SAM core domain.

The protein belongs to the TYW1 family. In terms of assembly, monomer. [4Fe-4S] cluster serves as cofactor.

The protein resides in the cytoplasm. It carries out the reaction N(1)-methylguanosine(37) in tRNA(Phe) + pyruvate + S-adenosyl-L-methionine = 4-demethylwyosine(37) in tRNA(Phe) + 5'-deoxyadenosine + L-methionine + CO2 + H2O. In terms of biological role, component of the wyosine derivatives biosynthesis pathway that catalyzes the condensation of N-methylguanine with 2 carbon atoms from pyruvate to form the tricyclic 4-demethylwyosine (imG-14) on guanosine-37 of tRNA(Phe). In Methanocaldococcus jannaschii (strain ATCC 43067 / DSM 2661 / JAL-1 / JCM 10045 / NBRC 100440) (Methanococcus jannaschii), this protein is S-adenosyl-L-methionine-dependent tRNA 4-demethylwyosine synthase.